The primary structure comprises 412 residues: Peptidase T (412 aa).

H81 lines the Zn(2+) pocket. D83 is a catalytic residue. D144 is a binding site for Zn(2+). Residue E178 is the Proton acceptor of the active site. E179, D201, and H383 together coordinate Zn(2+).

The protein belongs to the peptidase M20B family. The cofactor is Zn(2+).

It is found in the cytoplasm. It catalyses the reaction Release of the N-terminal residue from a tripeptide.. Functionally, cleaves the N-terminal amino acid of tripeptides. This is Peptidase T from Bacillus cereus (strain ATCC 14579 / DSM 31 / CCUG 7414 / JCM 2152 / NBRC 15305 / NCIMB 9373 / NCTC 2599 / NRRL B-3711).